The sequence spans 435 residues: Serine hydroxymethyltransferase (435 aa).

Residues Leu133 and 137-139 (GHL) each bind (6S)-5,6,7,8-tetrahydrofolate. At Lys242 the chain carries N6-(pyridoxal phosphate)lysine.

This sequence belongs to the SHMT family. In terms of assembly, homodimer. Pyridoxal 5'-phosphate serves as cofactor.

It is found in the cytoplasm. The enzyme catalyses (6R)-5,10-methylene-5,6,7,8-tetrahydrofolate + glycine + H2O = (6S)-5,6,7,8-tetrahydrofolate + L-serine. It functions in the pathway one-carbon metabolism; tetrahydrofolate interconversion. The protein operates within amino-acid biosynthesis; glycine biosynthesis; glycine from L-serine: step 1/1. Functionally, catalyzes the reversible interconversion of serine and glycine with tetrahydrofolate (THF) serving as the one-carbon carrier. This reaction serves as the major source of one-carbon groups required for the biosynthesis of purines, thymidylate, methionine, and other important biomolecules. Also exhibits THF-independent aldolase activity toward beta-hydroxyamino acids, producing glycine and aldehydes, via a retro-aldol mechanism. The polypeptide is Serine hydroxymethyltransferase (Hyphomonas neptunium (strain ATCC 15444)).